The primary structure comprises 581 residues: Estrogen receptor (581 aa).

The interval 1 to 144 (MYPEDSRGSG…GFEIAKEMRF (144 aa)) is modulating. Disordered stretches follow at residues 45-66 (APLD…SGPN) and 96-122 (PVYR…DDSY). Polar residues predominate over residues 56-66 (GSLQSLGSGPN). Low complexity predominate over residues 100–109 (SSVPSSQQSV). NR C4-type zinc fingers lie at residues 145 to 165 (CAVC…CEGC) and 181 to 205 (CPAT…LRKC). Residues 145–210 (CAVCSDYASG…RLRKCYEVGM (66 aa)) constitute a DNA-binding region (nuclear receptor). The interval 211–272 (MKGGMRKDRG…GGGKSSMISM (62 aa)) is hinge. Residues 216 to 246 (RKDRGRVLRRDKQRTGTSDRDKASKGLEHRT) show a composition bias toward basic and acidic residues. The segment at 216–268 (RKDRGRVLRRDKQRTGTSDRDKASKGLEHRTAPPQDRRKHISSSAGGGGGKSS) is disordered. Residues 273 to 509 (PPDQVLLLLQ…DLLLEMLDAH (237 aa)) enclose the NR LBD domain. Residues 516-528 (RPAETWSQADREP) show a composition bias toward basic and acidic residues. A disordered region spans residues 516 to 581 (RPAETWSQAD…GSRSECTHIL (66 aa)). Over residues 536–547 (SGGGGGGGGGSS) the composition is skewed to gly residues.

This sequence belongs to the nuclear hormone receptor family. NR3 subfamily. In terms of assembly, binds DNA as a homodimer. Can form a heterodimer with ER-beta.

Its subcellular location is the nucleus. The steroid hormones and their receptors are involved in the regulation of eukaryotic gene expression and affect cellular proliferation and differentiation in target tissues. This is Estrogen receptor (esr1) from Pagrus major (Red sea bream).